A 207-amino-acid polypeptide reads, in one-letter code: Putative 3-methyladenine DNA glycosylase (207 aa).

This sequence belongs to the DNA glycosylase MPG family.

The polypeptide is Putative 3-methyladenine DNA glycosylase (Listeria monocytogenes serotype 4b (strain CLIP80459)).